The primary structure comprises 303 residues: WD repeat-containing protein 38 (303 aa).

WD repeat units lie at residues 24–63 (QHHGEVNCSAFSPDGRTLLTASDDGCVYVWGTKSGRLLWR), 66–105 (GHRGPVKSCCFSPDGRLIASSSSDHSIRLWDVARSKCLHV), 108–147 (GHQRSVETVSFSPDSKQLASGGWDKRAIVWEVQSGRRVHL), 150–189 (GHCDSIQSSDFSPTSDSLATGSWDSTVHIWDLRASTPVVS), 195–233 (GHTGNISCLCYSASGLLASGSWDKTICVWKPTTNNLPLQ), 236–277 (GHTI…ETLK), and 279–303 (MLDVAHACIFTPDGKLLVSGAAVTR).

The protein is WD repeat-containing protein 38 (Wdr38) of Mus musculus (Mouse).